Consider the following 159-residue polypeptide: Ribosomal RNA large subunit methyltransferase H (159 aa).

Residues Leu76, Gly108, and Phe127 to Leu132 each bind S-adenosyl-L-methionine.

Belongs to the RNA methyltransferase RlmH family. Homodimer.

Its subcellular location is the cytoplasm. The enzyme catalyses pseudouridine(1915) in 23S rRNA + S-adenosyl-L-methionine = N(3)-methylpseudouridine(1915) in 23S rRNA + S-adenosyl-L-homocysteine + H(+). Specifically methylates the pseudouridine at position 1915 (m3Psi1915) in 23S rRNA. This is Ribosomal RNA large subunit methyltransferase H from Streptococcus mutans serotype c (strain ATCC 700610 / UA159).